We begin with the raw amino-acid sequence, 932 residues long: uncharacterized protein (932 aa).

5 disordered regions span residues asparagine 26 to threonine 120, methionine 158 to lysine 289, asparagine 304 to aspartate 617, glutamine 635 to valine 720, and serine 802 to glutamate 863. 2 stretches are compositionally biased toward low complexity: residues asparagine 41–serine 105 and asparagine 163–asparagine 241. The span at threonine 242–proline 253 shows a compositional bias: polar residues. A compositionally biased stretch (acidic residues) spans serine 265–glutamate 285. The span at asparagine 304 to asparagine 475 shows a compositional bias: low complexity. Composition is skewed to polar residues over residues glutamate 476 to serine 492 and aspartate 527 to glutamine 540. Low complexity predominate over residues serine 548–glycine 590. Basic and acidic residues predominate over residues glycine 606 to aspartate 617. 3 stretches are compositionally biased toward low complexity: residues glutamine 635–serine 666, serine 696–serine 707, and asparagine 813–serine 853. Residues glutamate 854–glutamate 863 show a composition bias toward basic and acidic residues.

This is an uncharacterized protein from Dictyostelium discoideum (Social amoeba).